Consider the following 614-residue polypeptide: Probable glycerol-3-phosphate dehydrogenase (614 aa).

57–85 is a binding site for FAD; sequence DLVVVGGGSTGAGCALDGATRGLKVALVD. The interval 595–614 is disordered; the sequence is MECPEEKRHRGERRLPPQEK. Over residues 598 to 614 the composition is skewed to basic and acidic residues; the sequence is PEEKRHRGERRLPPQEK.

Belongs to the FAD-dependent glycerol-3-phosphate dehydrogenase family. The cofactor is FAD.

The protein localises to the cytoplasm. It carries out the reaction a quinone + sn-glycerol 3-phosphate = dihydroxyacetone phosphate + a quinol. It participates in polyol metabolism; glycerol degradation via glycerol kinase pathway; glycerone phosphate from sn-glycerol 3-phosphate (anaerobic route): step 1/1. The protein is Probable glycerol-3-phosphate dehydrogenase of Encephalitozoon cuniculi (strain GB-M1) (Microsporidian parasite).